Reading from the N-terminus, the 457-residue chain is Multidrug resistance protein MdtK (457 aa).

Over 1–15 (MQKYTSEARQLLALR) the chain is Cytoplasmic. A helical membrane pass occupies residues 16–36 (IPVILAQVAQTAMGFVDTVMA). Residues 37 to 52 (GGYSATDMAAVAIGTS) lie on the Extracellular side of the membrane. A helical membrane pass occupies residues 53 to 73 (IWLPAILFGHGLLLALTPVIA). Residues 74 to 92 (QLNGSGRRERIAHQVRQGF) lie on the Cytoplasmic side of the membrane. A helical transmembrane segment spans residues 93 to 113 (WLAGFVSVLVMIVLWNAGYII). At 114 to 126 (RSMHNIDPALADK) the chain is on the extracellular side. A helical membrane pass occupies residues 127-147 (AVGYLRALLWGAPGYLFFQVA). Over 148 to 159 (RNQCEGLAKTKP) the chain is Cytoplasmic. Residues 160-180 (GMVMGFLGLLVNIPVNYIFIY) traverse the membrane as a helical segment. At 181 to 187 (GHFGMPE) the chain is on the extracellular side. Residues 188-208 (LGGIGCGVATAAVYWVMFIAM) form a helical membrane-spanning segment. The Cytoplasmic segment spans residues 209–242 (LSYIKHARSMRDIRNEKGFGKPDSVVMKRLIQLG). The helical transmembrane segment at 243 to 263 (LPIALALFFEVTLFAVVALLV) threads the bilayer. At 264 to 275 (SPLGIVDVAGHQ) the chain is on the extracellular side. Residues 276-296 (IALNFSSLMFVLPMSLAAAVT) traverse the membrane as a helical segment. Topologically, residues 297 to 313 (IRVGYRLGQGSTLDAQT) are cytoplasmic. A helical transmembrane segment spans residues 314–334 (AARTGLGVGICMAVVTAIFTV). Residues 335 to 349 (TLRKHIALLYNDNPE) are Extracellular-facing. A helical transmembrane segment spans residues 350 to 370 (VVALAAQLMLLAAVYQISDSI). The Cytoplasmic segment spans residues 371 to 386 (QVIGSGILRGYKDTRS). The chain crosses the membrane as a helical span at residues 387 to 407 (IFFITFTAYWVLGLPSGYILA). Residues 408 to 417 (LTDLVVDRMG) are Extracellular-facing. The helical transmembrane segment at 418–438 (PAGFWMGFIIGLTSAAVLMML) threads the bilayer. Over 439–457 (RMRYLQRQPSAIILQRAAR) the chain is Cytoplasmic.

It belongs to the multi antimicrobial extrusion (MATE) (TC 2.A.66.1) family. MdtK subfamily.

It localises to the cell inner membrane. Functionally, multidrug efflux pump that functions probably as a Na(+)/drug antiporter. This is Multidrug resistance protein MdtK (mdtK) from Salmonella typhimurium (strain LT2 / SGSC1412 / ATCC 700720).